The following is a 135-amino-acid chain: MGLTSQLIPALVCLLVCTSHFVHGHKCDITLEEIIKMLNILTSQKNSCMELPVADVFAAPKNATEKETFCRAGIELRRIYRNHMCLNKFLGGLDRNLSSLASKTCSVNEAKTSTSTLRDLLERLKTIMKEKYSKC.

Positions 1–24 (MGLTSQLIPALVCLLVCTSHFVHG) are cleaved as a signal peptide. Intrachain disulfides connect C27–C135, C48–C85, and C70–C105. Residues N62 and N96 are each glycosylated (N-linked (GlcNAc...) asparagine).

Belongs to the IL-4/IL-13 family.

It localises to the secreted. Its function is as follows. Participates in at least several B-cell activation processes as well as of other cell types. It is a costimulator of DNA-synthesis. It induces the expression of class II MHC molecules on resting B-cells. It enhances both secretion and cell surface expression of IgE and IgG1. It also regulates the expression of the low affinity Fc receptor for IgE (CD23) on both lymphocytes and monocytes. Positively regulates IL31RA expression in macrophages. Stimulates autophagy in dendritic cells by interfering with mTORC1 signaling and through the induction of RUFY4. The sequence is that of Interleukin-4 (IL4) from Capra hircus (Goat).